A 49-amino-acid chain; its full sequence is Peridinin-chlorophyll a-binding protein (49 aa).

As to quaternary structure, monomer. Post-translationally, binds 12 peridinin and 2 chlorophyll a molecules per monomer.

It is found in the plastid. The protein localises to the chloroplast. In terms of biological role, water-soluble antenna for capture of solar energy in the blue-green range. Peridinin is an asymmetric carotenoid. This chain is Peridinin-chlorophyll a-binding protein, found in Alexandrium cohorticula (Dinoflagellate).